The sequence spans 336 residues: MEQLIAAILTMVAGVLVCAAYFWSTNLVLDWIFPSKGKFGAVASRNLRIANSIRPWLFLAPALLALTLYLVYPVVQSVWLSLHGRGGQNFVGLSNYSWMINDGEFRQSIFNNFLWLLVVPALSTFFGLIIAALTDRIWWGNIAKTLIFMPMAISFVGAAVIWKFIYDYRAAGSEQIGLLNAIVVALGGEPQAWITLPFWNNFFLMVILIWIQTGFAMVILSAALRGIPEETIEAAVIDGANGWQIFFKIMVPQIWGTIAVVWTTITILVLKVFDIVLAMTNGQWQSQVLANLMFDWMFRGGGDFGRGAAIAVVIMILVVPIMIWNIRNATRESGGH.

8 consecutive transmembrane segments (helical) span residues 4–24 (LIAAILTMVAGVLVCAAYFWS), 55–75 (PWLFLAPALLALTLYLVYPVV), 113–133 (FLWLLVVPALSTFFGLIIAAL), 146–166 (LIFMPMAISFVGAAVIWKFIY), 176–196 (IGLLNAIVVALGGEPQAWITL), 202–222 (FFLMVILIWIQTGFAMVILSA), 258–278 (IAVVWTTITILVLKVFDIVLA), and 304–324 (FGRGAAIAVVIMILVVPIMIW). The ABC transmembrane type-1 domain maps to 109 to 325 (IFNNFLWLLV…ILVVPIMIWN (217 aa)).

Belongs to the binding-protein-dependent transport system permease family. MalFG subfamily.

Its subcellular location is the cell inner membrane. In terms of biological role, part of the binding-protein-dependent transport system for alpha-glucosides such as sucrose, maltose and trehalose. Probably responsible for the translocation of the substrate across the membrane. The sequence is that of Alpha-glucoside transport system permease protein AglF (aglF) from Rhizobium meliloti (strain 1021) (Ensifer meliloti).